A 77-amino-acid chain; its full sequence is Secapin (77 aa).

An N-terminal signal peptide occupies residues 1–32 (MKNYSKNATHLITVLLFSFVVILLIIPSKCEA). Positions 33 to 52 (VSNDMQPLEARSADLVPEPR) are excised as a propeptide. Cys61 and Cys72 are joined by a disulfide.

Belongs to the secapin family. In terms of tissue distribution, expressed by the venom gland.

It is found in the secreted. Serine protease inhibitor which exhibits antifibrinolytic, antielastolytic and antimicrobial activities. Displays antimicrobial activity against bacteria and fungi. Likely functions in the innate immune response to microbial infection and possibly in the venom, as an antifibrinolytic agent. Not toxic to mice but does induce slight sedation at higher doses (from 40 mg/kg). At a dose of 80 mg/kg, sedation occurs 15 minutes after injection and is accompanied by piloerection and hypothermia. This Apis mellifera (Honeybee) protein is Secapin.